Consider the following 305-residue polypeptide: MANSRILNDTAIDGQIEETTAWKDFLSLIKIGIVNSNLITTFTGMWLALHISGLSFLGNINTVLLTLIGSSLIIAGSCAINNWYDRDIDHLMERTKVRPTVTGKIQPSQALWSGILLVALGLIMLLMTTVMAAVIGFIGVFTYVVLYTMWTKRRYTINTVVGSVSGAVPPLIGWTAVEGNIGVVAWVLFMILFIWQIPHFLALAIKKTEDYRAANIPMLPVVYGFEVTKRQIIVWVACLMPLPFFLGSLGLPIVILGLLLNIGWLILGLMGFRSKNIMKWATQMFVYSLNYMTIYFVAMVVLTLF.

8 helical membrane-spanning segments follow: residues 38–58 (LITT…SFLG), 60–80 (INTV…SCAI), 115–135 (ILLV…AAVI), 157–177 (INTV…WTAV), 181–201 (IGVV…PHFL), 227–247 (VTKR…FFLG), 249–269 (LGLP…ILGL), and 285–305 (FVYS…LTLF).

Belongs to the UbiA prenyltransferase family. Protoheme IX farnesyltransferase subfamily. In terms of assembly, interacts with CtaA.

Its subcellular location is the cell membrane. It catalyses the reaction heme b + (2E,6E)-farnesyl diphosphate + H2O = Fe(II)-heme o + diphosphate. It participates in porphyrin-containing compound metabolism; heme O biosynthesis; heme O from protoheme: step 1/1. Its function is as follows. Converts heme B (protoheme IX) to heme O by substitution of the vinyl group on carbon 2 of heme B porphyrin ring with a hydroxyethyl farnesyl side group. This Bacillus subtilis (strain 168) protein is Protoheme IX farnesyltransferase 2 (ctaB2).